Here is a 708-residue protein sequence, read N- to C-terminus: Nicastrin (708 aa).

An N-terminal signal peptide occupies residues 1-27; the sequence is MATTRGGSGPDPGSRGLLLLSFSVVLA. Residues 28 to 668 lie on the Lumenal side of the membrane; it reads GLCGGNSVER…IFLIASKELE (641 aa). N-linked (GlcNAc...) asparagine glycosylation is found at Asn-44, Asn-54, and Asn-128. Residues Cys-49 and Cys-61 are joined by a disulfide bond. The cysteines at positions 139 and 158 are disulfide-linked. N-linked (GlcNAc...) asparagine glycosylation is found at Asn-186 and Asn-203. 2 disulfides stabilise this stretch: Cys-194-Cys-212 and Cys-229-Cys-247. 11 N-linked (GlcNAc...) asparagine glycosylation sites follow: Asn-263, Asn-386, Asn-434, Asn-463, Asn-505, Asn-529, Asn-561, Asn-572, Asn-579, Asn-593, and Asn-611. A disulfide bond links Cys-585 and Cys-619. A helical membrane pass occupies residues 669–689; the sequence is FITLIVGFSTLVFSLIVTYCI. At 690-708 the chain is on the cytoplasmic side; the sequence is NAKADVLFVAPREPGAVSY.

The protein belongs to the nicastrin family. Component of the gamma-secretase complex. The functional gamma-secretase complex is composed of at least four polypeptides: a presenilin homodimer (PSEN1 or PSEN2), nicastrin (NCSTN), APH1 (APH1A or APH1B) and PEN2. Binds to proteolytic processed C-terminal fragments C83 and C99 of the amyloid precursor protein (APP). Interacts with PSEN1 and PSEN2. N-glycosylated.

Its subcellular location is the membrane. The protein localises to the cytoplasmic vesicle membrane. It is found in the melanosome. Functionally, essential subunit of the gamma-secretase complex, an endoprotease complex that catalyzes the intramembrane cleavage of integral membrane proteins such as Notch receptors and APP (amyloid-beta precursor protein). The gamma-secretase complex plays a role in Notch and Wnt signaling cascades and regulation of downstream processes via its role in processing key regulatory proteins, and by regulating cytosolic CTNNB1 levels. The sequence is that of Nicastrin (Ncstn) from Mus musculus (Mouse).